The following is a 367-amino-acid chain: Phosphoribosylaminoimidazole-succinocarboxamide synthase (367 aa).

This sequence belongs to the SAICAR synthetase family.

The enzyme catalyses 5-amino-1-(5-phospho-D-ribosyl)imidazole-4-carboxylate + L-aspartate + ATP = (2S)-2-[5-amino-1-(5-phospho-beta-D-ribosyl)imidazole-4-carboxamido]succinate + ADP + phosphate + 2 H(+). The protein operates within purine metabolism; IMP biosynthesis via de novo pathway; 5-amino-1-(5-phospho-D-ribosyl)imidazole-4-carboxamide from 5-amino-1-(5-phospho-D-ribosyl)imidazole-4-carboxylate: step 1/2. The chain is Phosphoribosylaminoimidazole-succinocarboxamide synthase from Shewanella piezotolerans (strain WP3 / JCM 13877).